The primary structure comprises 446 residues: Packaging protein 1 (446 aa).

The disordered stretch occupies residues 1 to 72 (MEEKAGLRHL…SQVSKSKKQR (72 aa)). Polar residues predominate over residues 10 to 21 (LQNQQNEPSQDP). Residues 32–43 (HSDRNHLNKEAE) show a composition bias toward basic and acidic residues. 170 to 177 (GPTGCGKS) contacts ATP. The segment at 439–446 (RYYHSKKK) is DNA-binding.

Belongs to the adenoviridae packaging protein 1 family. As to quaternary structure, homodimer. Part of a genome packaging complex composed of packaging proteins 1, 2 and 3; this complex specifically binds to the packaging sequence on the left end of viral genomic DNA and performs packaging of the viral genome. Interacts with protein 33K.

The protein resides in the virion. It localises to the host nucleus. The protein localises to the host nucleoplasm. It is found in the host nucleolus. Component of the packaging machinery which encapsidates the viral DNA into preformed capsids and transcriptional activator of the viral major late promoter (MLP). Binds, along with packaging proteins 2 and 3, to the specific packaging sequence on the left end of viral genomic DNA and displays ATPase activity thereby providing the power stroke of the packaging machinery. The activity of packaging protein IVa2 is stimulated by protein 33K which acts as a terminase. May be the protein that pumps DNA into the capsid powered by ATP hydrolysis. Specifically binds to the 5'-CG-3' nucleotides of the repeats making up the packaging sequence. Component of the DEF-A and DEF-B transcription factors that bind downstream elements of the major late promoter (MLP), and stimulate transcription from the MLP after initiation of viral DNA replication. DEF-A is a heterodimer packaging proteins 1 and 2 and DEF-B is a homodimer of packaging protein 1. This is Packaging protein 1 from Canine adenovirus serotype 1 (strain CLL) (CAdV-1).